The chain runs to 122 residues: Large ribosomal subunit protein uL14 (122 aa).

Belongs to the universal ribosomal protein uL14 family. Part of the 50S ribosomal subunit. Forms a cluster with proteins L3 and L19. In the 70S ribosome, L14 and L19 interact and together make contacts with the 16S rRNA in bridges B5 and B8.

Its function is as follows. Binds to 23S rRNA. Forms part of two intersubunit bridges in the 70S ribosome. This chain is Large ribosomal subunit protein uL14, found in Borrelia hermsii (strain HS1 / DAH).